The chain runs to 151 residues: D-aminoacyl-tRNA deacylase (151 aa).

The Gly-cisPro motif, important for rejection of L-amino acids signature appears at 137–138 (GP).

This sequence belongs to the DTD family. Homodimer.

It localises to the cytoplasm. The catalysed reaction is glycyl-tRNA(Ala) + H2O = tRNA(Ala) + glycine + H(+). The enzyme catalyses a D-aminoacyl-tRNA + H2O = a tRNA + a D-alpha-amino acid + H(+). In terms of biological role, an aminoacyl-tRNA editing enzyme that deacylates mischarged D-aminoacyl-tRNAs. Also deacylates mischarged glycyl-tRNA(Ala), protecting cells against glycine mischarging by AlaRS. Acts via tRNA-based rather than protein-based catalysis; rejects L-amino acids rather than detecting D-amino acids in the active site. By recycling D-aminoacyl-tRNA to D-amino acids and free tRNA molecules, this enzyme counteracts the toxicity associated with the formation of D-aminoacyl-tRNA entities in vivo and helps enforce protein L-homochirality. The polypeptide is D-aminoacyl-tRNA deacylase (Acaryochloris marina (strain MBIC 11017)).